The sequence spans 328 residues: Malate dehydrogenase (328 aa).

11–17 (GAAGQIG) provides a ligand contact to NAD(+). Arginine 94 and arginine 100 together coordinate substrate. Residues asparagine 107, glutamine 114, and 131-133 (VGN) each bind NAD(+). The substrate site is built by asparagine 133 and arginine 164. Histidine 189 acts as the Proton acceptor in catalysis.

This sequence belongs to the LDH/MDH superfamily. MDH type 2 family.

It carries out the reaction (S)-malate + NAD(+) = oxaloacetate + NADH + H(+). Functionally, catalyzes the reversible oxidation of malate to oxaloacetate. This Acinetobacter baumannii (strain SDF) protein is Malate dehydrogenase.